A 65-amino-acid chain; its full sequence is DNA-directed RNA polymerase subunit Rpo10 (65 aa).

Residues C7, C10, C44, and C45 each contribute to the Zn(2+) site.

The protein belongs to the archaeal Rpo10/eukaryotic RPB10 RNA polymerase subunit family. In terms of assembly, part of the RNA polymerase complex. Zn(2+) is required as a cofactor.

It is found in the cytoplasm. It catalyses the reaction RNA(n) + a ribonucleoside 5'-triphosphate = RNA(n+1) + diphosphate. DNA-dependent RNA polymerase (RNAP) catalyzes the transcription of DNA into RNA using the four ribonucleoside triphosphates as substrates. In Pyrobaculum arsenaticum (strain DSM 13514 / JCM 11321 / PZ6), this protein is DNA-directed RNA polymerase subunit Rpo10.